The chain runs to 231 residues: RNA pyrophosphohydrolase (231 aa).

The 144-residue stretch at glycine 6–threonine 149 folds into the Nudix hydrolase domain. A Nudix box motif is present at residues glycine 38–glycine 59. Positions arginine 157–alanine 190 are disordered.

This sequence belongs to the Nudix hydrolase family. RppH subfamily. The cofactor is a divalent metal cation.

Functionally, accelerates the degradation of transcripts by removing pyrophosphate from the 5'-end of triphosphorylated RNA, leading to a more labile monophosphorylated state that can stimulate subsequent ribonuclease cleavage. This is RNA pyrophosphohydrolase from Paraburkholderia phymatum (strain DSM 17167 / CIP 108236 / LMG 21445 / STM815) (Burkholderia phymatum).